A 332-amino-acid polypeptide reads, in one-letter code: Endo-1,4-beta-xylanase (332 aa).

The N-terminal stretch at 1-21 (MLSSTTLLAILSALALTSVQA) is a signal peptide. Positions 26 to 316 (KNSLDYLANK…KSTYYVVQQA (291 aa)) constitute a GH10 domain. The Proton donor role is filled by Glu-120. Residues Cys-128 and Cys-160 are joined by a disulfide bond. Glu-214 (nucleophile) is an active-site residue. Cys-247 and Cys-253 form a disulfide bridge.

This sequence belongs to the glycosyl hydrolase 10 (cellulase F) family.

The protein resides in the secreted. It carries out the reaction Endohydrolysis of (1-&gt;4)-beta-D-xylosidic linkages in xylans.. Requires at least three xylose residues for catalytic activity. Does not have activity against xylobiose. This is Endo-1,4-beta-xylanase from Naganishia albida (Cryptococcus albidus).